A 432-amino-acid polypeptide reads, in one-letter code: Anaerobic glycerol-3-phosphate dehydrogenase subunit B (432 aa).

Belongs to the anaerobic G-3-P dehydrogenase subunit B family. Composed of a catalytic GlpA/B dimer and of membrane bound GlpC. FMN serves as cofactor.

The catalysed reaction is a quinone + sn-glycerol 3-phosphate = dihydroxyacetone phosphate + a quinol. The protein operates within polyol metabolism; glycerol degradation via glycerol kinase pathway; glycerone phosphate from sn-glycerol 3-phosphate (anaerobic route): step 1/1. In terms of biological role, conversion of glycerol 3-phosphate to dihydroxyacetone. Uses fumarate or nitrate as electron acceptor. This is Anaerobic glycerol-3-phosphate dehydrogenase subunit B from Haemophilus influenzae (strain 86-028NP).